Consider the following 402-residue polypeptide: Putative F-box/kelch-repeat protein At1g61540 (402 aa).

One can recognise an F-box domain in the interval 24-70 (PISIMSLPYDLLLNCFSLVSRLYYPTLSLVSKTFRSIITSRELYEIR). Kelch repeat units follow at residues 135–189 (NIYK…CEVD), 191–240 (KIYI…EVKS), and 246–293 (KIYM…VVDN).

This is Putative F-box/kelch-repeat protein At1g61540 from Arabidopsis thaliana (Mouse-ear cress).